Here is a 155-residue protein sequence, read N- to C-terminus: Ribonuclease H (155 aa).

The 142-residue stretch at 1–142 (MTKQVEIFTD…CDELARAAAM (142 aa)) folds into the RNase H type-1 domain. The Mg(2+) site is built by D10, E48, D70, and D134.

This sequence belongs to the RNase H family. In terms of assembly, monomer. The cofactor is Mg(2+).

It localises to the cytoplasm. It carries out the reaction Endonucleolytic cleavage to 5'-phosphomonoester.. In terms of biological role, endonuclease that specifically degrades the RNA of RNA-DNA hybrids. The polypeptide is Ribonuclease H (Enterobacter sp. (strain 638)).